A 209-amino-acid polypeptide reads, in one-letter code: uncharacterized protein (209 aa).

Residues M1 to G167 form the Nudix hydrolase domain.

This is an uncharacterized protein from Orgyia pseudotsugata (Douglas-fir tussock moth).